Consider the following 545-residue polypeptide: Glucose-6-phosphate isomerase (545 aa).

Glu-351 serves as the catalytic Proton donor. Catalysis depends on residues His-382 and Lys-510.

It belongs to the GPI family.

It localises to the cytoplasm. The catalysed reaction is alpha-D-glucose 6-phosphate = beta-D-fructose 6-phosphate. Its pathway is carbohydrate biosynthesis; gluconeogenesis. It participates in carbohydrate degradation; glycolysis; D-glyceraldehyde 3-phosphate and glycerone phosphate from D-glucose: step 2/4. Functionally, catalyzes the reversible isomerization of glucose-6-phosphate to fructose-6-phosphate. This is Glucose-6-phosphate isomerase from Shewanella sp. (strain MR-7).